Reading from the N-terminus, the 131-residue chain is Ribosome-binding factor A (131 aa).

The protein belongs to the RbfA family. In terms of assembly, monomer. Binds 30S ribosomal subunits, but not 50S ribosomal subunits or 70S ribosomes.

It localises to the cytoplasm. Its function is as follows. One of several proteins that assist in the late maturation steps of the functional core of the 30S ribosomal subunit. Associates with free 30S ribosomal subunits (but not with 30S subunits that are part of 70S ribosomes or polysomes). Required for efficient processing of 16S rRNA. May interact with the 5'-terminal helix region of 16S rRNA. This is Ribosome-binding factor A from Protochlamydia amoebophila (strain UWE25).